We begin with the raw amino-acid sequence, 78 residues long: Putative defensin-like protein 133 (78 aa).

The signal sequence occupies residues 1 to 24 (MKRSFLLLLTILTIFIILGQGVMG). 4 cysteine pairs are disulfide-bonded: Cys34-Cys75, Cys44-Cys68, Cys49-Cys72, and Cys53-Cys74.

This sequence belongs to the DEFL family.

It localises to the secreted. The polypeptide is Putative defensin-like protein 133 (LCR33) (Arabidopsis thaliana (Mouse-ear cress)).